The chain runs to 101 residues: Feather keratin Cos2-3 (101 aa).

Ser-2 carries the N-acetylserine modification.

It belongs to the avian keratin family. The avian keratins (F-ker, S-ker, C-ker and B-ker) are a complex mixture of very similar polypeptides.

This is Feather keratin Cos2-3 from Columba livia (Rock dove).